We begin with the raw amino-acid sequence, 351 residues long: Sesquiterpene synthase 14 (351 aa).

The Mg(2+) site is built by D87, N223, S227, and E231. Residues 87 to 91 (DEYTD) carry the DDXXD motif motif. The NSE/DTE motif signature appears at 223-231 (NDIASYNKE). (2E,6E)-farnesyl diphosphate contacts are provided by R312 and Y313.

Belongs to the terpene synthase family. Requires Mg(2+) as cofactor.

It catalyses the reaction (2E,6E)-farnesyl diphosphate = pentalenene + diphosphate. Terpene cyclase that catalyzes the cyclization of farnesyl diphosphate (FPP) to pentalenene as a major product, as well as caryophyllene. The sequence is that of Sesquiterpene synthase 14 from Postia placenta (strain ATCC 44394 / Madison 698-R) (Brown rot fungus).